We begin with the raw amino-acid sequence, 303 residues long: Acetyl-coenzyme A carboxylase carboxyl transferase subunit beta (303 aa).

The CoA carboxyltransferase N-terminal domain occupies 29 to 298 (LWVKCPETGQ…ATPAPASAAA (270 aa)).

The protein belongs to the AccD/PCCB family. As to quaternary structure, acetyl-CoA carboxylase is a heterohexamer composed of biotin carboxyl carrier protein (AccB), biotin carboxylase (AccC) and two subunits each of ACCase subunit alpha (AccA) and ACCase subunit beta (AccD).

It is found in the cytoplasm. It carries out the reaction N(6)-carboxybiotinyl-L-lysyl-[protein] + acetyl-CoA = N(6)-biotinyl-L-lysyl-[protein] + malonyl-CoA. It functions in the pathway lipid metabolism; malonyl-CoA biosynthesis; malonyl-CoA from acetyl-CoA: step 1/1. Component of the acetyl coenzyme A carboxylase (ACC) complex. Biotin carboxylase (BC) catalyzes the carboxylation of biotin on its carrier protein (BCCP) and then the CO(2) group is transferred by the transcarboxylase to acetyl-CoA to form malonyl-CoA. The protein is Acetyl-coenzyme A carboxylase carboxyl transferase subunit beta of Methylobacterium sp. (strain 4-46).